The primary structure comprises 357 residues: Retinoic acid-induced protein 3 (357 aa).

Residues 1–33 (MATTVPDGCRNGLKSKYYRLCDKAEAWGIVLET) are Extracellular-facing. A helical transmembrane segment spans residues 34–54 (VATAGVVTSVAFMLTLPILVC). The Cytoplasmic portion of the chain corresponds to 55-68 (KVQDSNRRKMLPTQ). The chain crosses the membrane as a helical span at residues 69–89 (FLFLLGVLGIFGLTFAFIIGL). The Extracellular segment spans residues 90-97 (DGSTGPTR). Residues 98–118 (FFLFGILFSICFSCLLAHAVS) form a helical membrane-spanning segment. Residues 119–129 (LTKLVRGRKPL) lie on the Cytoplasmic side of the membrane. Residues 130–150 (SLLVILGLAVGFSLVQDVIAI) form a helical membrane-spanning segment. Topologically, residues 151 to 176 (EYIVLTMNRTNVNVFSELSAPRRNED) are extracellular. N158 carries N-linked (GlcNAc...) asparagine glycosylation. The chain crosses the membrane as a helical span at residues 177 to 197 (FVLLLTYVLFLMALTFLMSSF). Residues 198-212 (TFCGSFTGWKRHGAH) are Cytoplasmic-facing. The helical transmembrane segment at 213-233 (IYLTMLLSIAIWVAWITLLML) threads the bilayer. The Extracellular segment spans residues 234-247 (PDFDRRWDDTILSS). Residues 248–268 (ALAANGWVFLLAYVSPEFWLL) form a helical membrane-spanning segment. Topologically, residues 269-357 (TKQRNPMDYP…KDYEVKKEGS (89 aa)) are cytoplasmic. A Phosphoserine modification is found at S301. Y317 and Y320 each carry phosphotyrosine. The residue at position 345 (S345) is a Phosphoserine. Residues Y347 and Y350 each carry the phosphotyrosine modification.

It belongs to the G-protein coupled receptor 3 family. As to quaternary structure, interacts (via its transmembrane domain) with EGFR. In terms of processing, phosphorylated in two conserved double-tyrosine motifs, Tyr-317/Tyr-320 and Tyr-347/Tyr-350, by EGFR; leading to inactivation of the tumor suppressive function of GPRC5A in lung cancer cells. Tyr-317 and Tyr-320 are the preferred residues responsible for EGFR-mediated GPRC5A phosphorylation. As to expression, expressed at high level in fetal and adult lung tissues but repressed in most human lung cancers. Constitutively expressed in fetal kidney and adult placenta, kidney, prostate, testis, ovary, small intestine, colon, stomach, and spinal cord at low to moderate levels. Not detectable in fetal heart, brain, and liver and adult heart, brain, liver, skeletal muscle, pancreas, spleen, thymus, and peripheral leukocytes. According to PubMed:10783259, expressed at low but detectable level in pancreas and heart.

It localises to the cell membrane. It is found in the cytoplasmic vesicle membrane. Orphan receptor. Could be involved in modulating differentiation and maintaining homeostasis of epithelial cells. This retinoic acid-inducible GPCR provide evidence for a possible interaction between retinoid and G-protein signaling pathways. Functions as a negative modulator of EGFR signaling. May act as a lung tumor suppressor. In Homo sapiens (Human), this protein is Retinoic acid-induced protein 3 (GPRC5A).